The chain runs to 527 residues: GMP synthase [glutamine-hydrolyzing] (527 aa).

The Glutamine amidotransferase type-1 domain occupies 19 to 212; it reads KIIVLDYGSQ…AFSICGAKGD (194 aa). C96 acts as the Nucleophile in catalysis. Active-site residues include H186 and E188. A GMPS ATP-PPase domain is found at 213–402; the sequence is WSMANFVDMQ…LGMPDEVVWR (190 aa). An ATP-binding site is contributed by 240 to 246; sequence SGGVDSS.

In terms of assembly, homodimer.

The catalysed reaction is XMP + L-glutamine + ATP + H2O = GMP + L-glutamate + AMP + diphosphate + 2 H(+). The protein operates within purine metabolism; GMP biosynthesis; GMP from XMP (L-Gln route): step 1/1. In terms of biological role, catalyzes the synthesis of GMP from XMP. This chain is GMP synthase [glutamine-hydrolyzing], found in Streptococcus thermophilus (strain CNRZ 1066).